A 212-amino-acid polypeptide reads, in one-letter code: ATP phosphoribosyltransferase (212 aa).

Belongs to the ATP phosphoribosyltransferase family. Short subfamily. In terms of assembly, heteromultimer composed of HisG and HisZ subunits.

The protein localises to the cytoplasm. The enzyme catalyses 1-(5-phospho-beta-D-ribosyl)-ATP + diphosphate = 5-phospho-alpha-D-ribose 1-diphosphate + ATP. The protein operates within amino-acid biosynthesis; L-histidine biosynthesis; L-histidine from 5-phospho-alpha-D-ribose 1-diphosphate: step 1/9. Its function is as follows. Catalyzes the condensation of ATP and 5-phosphoribose 1-diphosphate to form N'-(5'-phosphoribosyl)-ATP (PR-ATP). Has a crucial role in the pathway because the rate of histidine biosynthesis seems to be controlled primarily by regulation of HisG enzymatic activity. The polypeptide is ATP phosphoribosyltransferase (Prochlorococcus marinus (strain AS9601)).